The primary structure comprises 217 residues: Probable disulfide bond formation protein D (217 aa).

An N-terminal signal peptide occupies residues 1–28; sequence MKSSNKLMALGIVFSIAVLIVIGTIVYS. A disulfide bridge connects residues cysteine 66 and cysteine 69.

It belongs to the thioredoxin family. DsbA subfamily.

In terms of biological role, may be required for disulfide bond formation in some proteins. The chain is Probable disulfide bond formation protein D (bdbD) from Bacillus anthracis.